The following is a 524-amino-acid chain: Fusicoccadiene C-8 hydroxylase (524 aa).

Residues 16-36 (LQLLCIGPLVYACVSFIIKIV) form a helical membrane-spanning segment. N126 and N344 each carry an N-linked (GlcNAc...) asparagine glycan. C465 contributes to the heme binding site. N-linked (GlcNAc...) asparagine glycosylation is present at N496.

Belongs to the cytochrome P450 family. Heme serves as cofactor.

The protein localises to the membrane. It participates in mycotoxin biosynthesis. Its function is as follows. Cytochrome P450 monooxygenase; part of the 2 gene clusters that mediate the biosynthesis of fusicoccins, diterpene glucosides that display phytohormone-like activity and function as potent activators of plasma membrane H(+)-ATPases in plants by modifying 14-3-3 proteins and cause the plant disease constriction canker. The first step in the pathway is performed by the fusicoccadiene synthase PaFS that possesses both prenyl transferase and terpene cyclase activity, converting isopentenyl diphosphate and dimethylallyl diphosphate into geranylgeranyl diphosphate (GGDP) and successively converting GGDP into fusicocca-2,10(14)-diene, a precursor for fusicoccin H. The second step is the oxidation at the C-8 position by the cytochrome P450 monooxygenase PaP450-2 to yield fusicocca-2,10(14)-diene-8-beta-ol. The cytochrome P450 monooxygenase PaP450-1 then catalyzes the hydroxylation at the C-16 position to produce fusicocca-2,10(14)-diene-8-beta,16-diol. The dioxygenase fc-dox then catalyzes the 16-oxydation of fusicocca-2,10(14)-diene-8-beta,16-diol to yield an aldehyde (8-beta-hydroxyfusicocca-1,10(14)-dien-16-al). The short-chain dehydrogenase/reductase fc-sdr catalyzes the reduction of the aldehyde to yield fusicocca-1,10(14)-diene-8-beta,16-diol. The next step is the hydroxylation at C-9 performed by the cytochrome P450 monooxygenase PaP450-3 that leads to fusicoccin H aglycon which is glycosylated to fusicoccin H by the O-glycosyltransferase PaGT. Hydroxylation at C-12 by the cytochrome P450 monooxygenase PaP450-4 leads then to the production of fusicoccin Q and is followed by methylation by the O-methyltransferase PaMT to yield fusicoccin P. Fusicoccin P is further converted to fusicoccin J via prenylation by the O-glucose prenyltransferase PaPT. Cytochrome P450 monooxygenase PaP450-5 then performs hydroxylation at C-19 to yield dideacetyl-fusicoccin A which is acetylated to 3'-O-deacetyl-fusicoccin A by the O-acetyltransferase PaAT-2. Finally, a another acetylation by the O-acetyltransferase PaAT-1 yields fusicoccin A. In Phomopsis amygdali (Fusicoccum amygdali), this protein is Fusicoccadiene C-8 hydroxylase.